We begin with the raw amino-acid sequence, 939 residues long: UvrABC system protein A (939 aa).

Residue Gly-32–Ser-39 participates in ATP binding. Residues Cys-252–Cys-279 form a C4-type zinc finger. 2 ABC transporter domains span residues Trp-309–Ile-588 and Ala-608–Lys-936. Gly-640–Ser-647 is an ATP binding site. The C4-type zinc finger occupies Cys-739–Cys-765.

The protein belongs to the ABC transporter superfamily. UvrA family. As to quaternary structure, forms a heterotetramer with UvrB during the search for lesions.

Its subcellular location is the cytoplasm. Functionally, the UvrABC repair system catalyzes the recognition and processing of DNA lesions. UvrA is an ATPase and a DNA-binding protein. A damage recognition complex composed of 2 UvrA and 2 UvrB subunits scans DNA for abnormalities. When the presence of a lesion has been verified by UvrB, the UvrA molecules dissociate. In Clostridium acetobutylicum (strain ATCC 824 / DSM 792 / JCM 1419 / IAM 19013 / LMG 5710 / NBRC 13948 / NRRL B-527 / VKM B-1787 / 2291 / W), this protein is UvrABC system protein A.